The primary structure comprises 151 residues: Large ribosomal subunit protein uL13 (151 aa).

The protein belongs to the universal ribosomal protein uL13 family. In terms of assembly, part of the 50S ribosomal subunit.

Functionally, this protein is one of the early assembly proteins of the 50S ribosomal subunit, although it is not seen to bind rRNA by itself. It is important during the early stages of 50S assembly. This chain is Large ribosomal subunit protein uL13, found in Nostoc sp. (strain PCC 7120 / SAG 25.82 / UTEX 2576).